The chain runs to 357 residues: 3-dehydroquinate synthase (357 aa).

NAD(+) is bound by residues 69–74 (DGEKNK), 103–107 (GVIGD), 127–128 (TT), lysine 140, and lysine 149. Residues glutamate 182, histidine 245, and histidine 262 each coordinate Zn(2+).

This sequence belongs to the sugar phosphate cyclases superfamily. Dehydroquinate synthase family. It depends on Co(2+) as a cofactor. Requires Zn(2+) as cofactor. NAD(+) is required as a cofactor.

The protein localises to the cytoplasm. It carries out the reaction 7-phospho-2-dehydro-3-deoxy-D-arabino-heptonate = 3-dehydroquinate + phosphate. Its pathway is metabolic intermediate biosynthesis; chorismate biosynthesis; chorismate from D-erythrose 4-phosphate and phosphoenolpyruvate: step 2/7. Functionally, catalyzes the conversion of 3-deoxy-D-arabino-heptulosonate 7-phosphate (DAHP) to dehydroquinate (DHQ). This is 3-dehydroquinate synthase from Shewanella denitrificans (strain OS217 / ATCC BAA-1090 / DSM 15013).